The following is a 202-amino-acid chain: LexA repressor (202 aa).

A DNA-binding region (H-T-H motif) is located at residues 28 to 48 (RAEIAAQLGFRSPNAAEEHLK). Residues S119 and K156 each act as for autocatalytic cleavage activity in the active site.

Belongs to the peptidase S24 family. In terms of assembly, homodimer.

The enzyme catalyses Hydrolysis of Ala-|-Gly bond in repressor LexA.. In terms of biological role, represses a number of genes involved in the response to DNA damage (SOS response), including recA and lexA. Binds to the 16 bp palindromic sequence 5'-CTGTATATATATACAG-3'. In the presence of single-stranded DNA, RecA interacts with LexA causing an autocatalytic cleavage which disrupts the DNA-binding part of LexA, leading to derepression of the SOS regulon and eventually DNA repair. The polypeptide is LexA repressor (Erwinia tasmaniensis (strain DSM 17950 / CFBP 7177 / CIP 109463 / NCPPB 4357 / Et1/99)).